The following is a 572-amino-acid chain: Proline--tRNA ligase (572 aa).

It belongs to the class-II aminoacyl-tRNA synthetase family. ProS type 1 subfamily. Homodimer.

The protein resides in the cytoplasm. It carries out the reaction tRNA(Pro) + L-proline + ATP = L-prolyl-tRNA(Pro) + AMP + diphosphate. Functionally, catalyzes the attachment of proline to tRNA(Pro) in a two-step reaction: proline is first activated by ATP to form Pro-AMP and then transferred to the acceptor end of tRNA(Pro). As ProRS can inadvertently accommodate and process non-cognate amino acids such as alanine and cysteine, to avoid such errors it has two additional distinct editing activities against alanine. One activity is designated as 'pretransfer' editing and involves the tRNA(Pro)-independent hydrolysis of activated Ala-AMP. The other activity is designated 'posttransfer' editing and involves deacylation of mischarged Ala-tRNA(Pro). The misacylated Cys-tRNA(Pro) is not edited by ProRS. The chain is Proline--tRNA ligase from Escherichia coli O127:H6 (strain E2348/69 / EPEC).